Consider the following 276-residue polypeptide: Putative hydro-lyase Xaut_1503 (276 aa).

It belongs to the D-glutamate cyclase family.

The polypeptide is Putative hydro-lyase Xaut_1503 (Xanthobacter autotrophicus (strain ATCC BAA-1158 / Py2)).